The following is a 404-amino-acid chain: Tryptophan synthase beta chain (404 aa).

Lys-98 carries the N6-(pyridoxal phosphate)lysine modification.

It belongs to the TrpB family. In terms of assembly, tetramer of two alpha and two beta chains. Pyridoxal 5'-phosphate is required as a cofactor.

It carries out the reaction (1S,2R)-1-C-(indol-3-yl)glycerol 3-phosphate + L-serine = D-glyceraldehyde 3-phosphate + L-tryptophan + H2O. The protein operates within amino-acid biosynthesis; L-tryptophan biosynthesis; L-tryptophan from chorismate: step 5/5. Its function is as follows. The beta subunit is responsible for the synthesis of L-tryptophan from indole and L-serine. The sequence is that of Tryptophan synthase beta chain from Acidiphilium cryptum (strain JF-5).